The following is a 429-amino-acid chain: Adenosylhomocysteinase (429 aa).

Substrate-binding residues include threonine 64, aspartate 136, and glutamate 161. An NAD(+)-binding site is contributed by 162–164 (TTT). Lysine 191 and aspartate 195 together coordinate substrate. NAD(+) contacts are provided by residues asparagine 196, 225 to 230 (GYGWCG), glutamate 248, asparagine 283, 304 to 306 (SGH), and asparagine 351.

The protein belongs to the adenosylhomocysteinase family. It depends on NAD(+) as a cofactor.

The protein localises to the cytoplasm. The enzyme catalyses S-adenosyl-L-homocysteine + H2O = L-homocysteine + adenosine. The protein operates within amino-acid biosynthesis; L-homocysteine biosynthesis; L-homocysteine from S-adenosyl-L-homocysteine: step 1/1. Its function is as follows. May play a key role in the regulation of the intracellular concentration of adenosylhomocysteine. This chain is Adenosylhomocysteinase, found in Thermosynechococcus vestitus (strain NIES-2133 / IAM M-273 / BP-1).